The primary structure comprises 792 residues: Phosphatidylinositol 4-phosphate 5-kinase type-1 sktl (792 aa).

A compositionally biased stretch (basic and acidic residues) spans 1–21; it reads MDTRVELELEPVGKQDRLKDQ. Disordered regions lie at residues 1-74, 105-139, 423-446, 577-612, and 640-714; these read MDTR…QPGT, TQTP…KKLG, AKLQ…DAPE, TPTF…PTNA, and AAST…TDLS. Polar residues-rich tracts occupy residues 52 to 62 and 105 to 131; these read QTASPDQEATP and TQTP…STTG. The region spanning 155–573 is the PIPK domain; it reads QSKQIMGSIQ…RFQDAMGKQV (419 aa). Low complexity predominate over residues 642–658; sequence STSSLQQQRSSNQSNNN. Positions 678–702 are enriched in polar residues; the sequence is EPSSTYHTQYSYDSSGRTGSALTSD.

In terms of assembly, interacts with ash2 (via B30.2/SPRY domain); the interaction is direct and seems to be specific for ash2 isoform B.

It is found in the cytoplasm. Its subcellular location is the cell cortex. The protein localises to the nucleus. The protein resides in the chromosome. It localises to the apical cell membrane. It is found in the cell projection. Its subcellular location is the cilium. The protein localises to the flagellum membrane. It carries out the reaction a 1,2-diacyl-sn-glycero-3-phospho-(1D-myo-inositol 4-phosphate) + ATP = a 1,2-diacyl-sn-glycero-3-phospho-(1D-myo-inositol-4,5-bisphosphate) + ADP + H(+). Its function is as follows. Catalyzes the phosphorylation of phosphatidylinositol 4-phosphate (PtdIns[4]P) to form phosphatidylinositol 4,5-bisphosphate (PtdIns[4,5]P(2)), a lipid second messenger that regulates several cellular processes such as signal transduction, vesicle trafficking, actin cytoskeleton dynamics, cell adhesion, and cell motility. PtdIns[4,5]P(2) can directly act as a second messenger or can be utilized as a precursor to generate other second messengers: inositol 1,4,5-trisphosphate (IP3), diacylglycerol (DAG) or phosphatidylinositol-3,4,5-trisphosphate (PtdIns[3,4,5]P(3)). Required for germline development during oogenesis. Sktl is the major phosphatidylinositol 4-phosphate 5-kinase responsible for enrichment of PtdIns[4,5]P(2) in the apical plasma membrane of the oocyte and follicular epithelium cells of the egg chamber during oogenesis. Involved in nuclear anchoring and microtubule organization required for targeted mRNA transport during maintenance of oocyte polarity. The PtdIns[4,5]P(2) produced by sktl is required for maintenance of cellular polarity, prevention of the epithelial-mesenchymal transition process, maintenance of adherens junctions and regulation of apical constriction, probably by affecting polarized cortical recruitment of PAR proteins and their effectors, including baz/bazooka, aPKC, par-1 and l(2)gl. Involved in actin cytoskeleton organization probably through PtdIns[4,5]P(2)-mediated regulation of Moe/Moesin phosphorylation. Involved in PtdIns[4,5]P(2)-mediated apical recruitment of the formin dia/diaphanous in tubular epithelial cells. Involved in anterodorsal cell morphogenesis and eggshell dorsal appendage formation, probably through regulation of apical constriction by PtdIns[4,5]P(2) during tubulogenesis. Required for cell viability or proliferation during wing and eye imaginal disk development. May be involved in cytoskeletal regulation during sensory bristle development. Together with mys/integrin beta localizes to the trailing edge of larval epidermal cells in a JNK signaling-dependent manner during wound healing and is required for setting up cell polarity and re-epithelialization. Required for polarization of elongating spermatid cysts possibly by generation of PtdIns[4,5]P(2) involved in mediating membrane association and orientation of the nucleus-basal body pair. Probably involved in PtdIns[4,5]P(2)-mediated recruitment of exocyst proteins that may mediate membrane addition during spermatid elongation. Involved in maintenance of specialised cell contacts known as slit diaphragms required for nephrocyte morphogenesis and function. Regulates nephrocyte endocytosis, possibly through PtdIns[4,5]P(2)-mediated recruitment of effector proteins. Not required for nervous system development or neurotransmitter release at the neuromuscular junction. Together with ash2 probably plays a role in maintenance of transcriptionally active chromatin through down-regulation of histone H1 hyperphosphorylation. The chain is Phosphatidylinositol 4-phosphate 5-kinase type-1 sktl from Drosophila melanogaster (Fruit fly).